Here is a 206-residue protein sequence, read N- to C-terminus: Small ribosomal subunit protein uS4 (206 aa).

The S4 RNA-binding domain maps to 96–156 (GRLDNVVYRM…EKAKKQSRVK (61 aa)).

This sequence belongs to the universal ribosomal protein uS4 family. As to quaternary structure, part of the 30S ribosomal subunit. Contacts protein S5. The interaction surface between S4 and S5 is involved in control of translational fidelity.

One of the primary rRNA binding proteins, it binds directly to 16S rRNA where it nucleates assembly of the body of the 30S subunit. Its function is as follows. With S5 and S12 plays an important role in translational accuracy. This is Small ribosomal subunit protein uS4 from Escherichia fergusonii (strain ATCC 35469 / DSM 13698 / CCUG 18766 / IAM 14443 / JCM 21226 / LMG 7866 / NBRC 102419 / NCTC 12128 / CDC 0568-73).